The sequence spans 738 residues: Melanotransferrin (738 aa).

The signal sequence occupies residues 1 to 19; that stretch reads MRGPSGALWLLLALRTVLG. The interval 20–30 is antigenic epitope; the sequence is GMEVRWCATSD. 2 consecutive Transferrin-like domains span residues 23-357 and 366-706; these read VRWC…GLLC and LRWC…GMSS. 2 cysteine pairs are disulfide-bonded: C26–C63 and C36–C54. A glycan (N-linked (GlcNAc...) asparagine) is linked at N38. The Fe(3+) site is built by D78 and Y107. Cystine bridges form between C130–C216, C172–C189, C186–C199, and C257–C271. T132 is a binding site for hydrogencarbonate. N-linked (GlcNAc...) asparagine glycosylation is present at N135. Hydrogencarbonate-binding residues include R136, V138, and G139. Y210 lines the Fe(3+) pocket. Residues H279, S421, and Y451 each contribute to the Fe(3+) site. A Phosphoserine; by FAM20C modification is found at S462. The N-linked (GlcNAc...) asparagine glycan is linked to N515. Fe(3+)-binding residues include Y556 and H625. A lipid anchor (GPI-anchor amidated cysteine) is attached at C709. Residues 710–738 constitute a propeptide, removed in mature form; sequence SGAAAPAPGAPLLPLLLPALAARLLPPAL.

The protein belongs to the transferrin family. In terms of tissue distribution, found predominantly in human melanomas and in certain fetal tissues; also found in liver, epithelium, umbilical chord, placenta and sweat gland ducts.

It localises to the cell membrane. Its function is as follows. Involved in iron cellular uptake. Seems to be internalized and then recycled back to the cell membrane. Binds a single atom of iron per subunit. Could also bind zinc. This chain is Melanotransferrin, found in Homo sapiens (Human).